Consider the following 565-residue polypeptide: NAD-dependent malic enzyme (565 aa).

Tyrosine 104 acts as the Proton donor in catalysis. Residue arginine 157 participates in NAD(+) binding. Lysine 175 functions as the Proton acceptor in the catalytic mechanism. A divalent metal cation-binding residues include glutamate 246, aspartate 247, and aspartate 270. NAD(+) is bound by residues aspartate 270 and asparagine 418.

This sequence belongs to the malic enzymes family. Homotetramer. Mg(2+) serves as cofactor. The cofactor is Mn(2+).

The enzyme catalyses (S)-malate + NAD(+) = pyruvate + CO2 + NADH. It catalyses the reaction oxaloacetate + H(+) = pyruvate + CO2. In Salmonella newport (strain SL254), this protein is NAD-dependent malic enzyme.